The following is a 426-amino-acid chain: Tyrosine--tRNA ligase (426 aa).

Tyr-37 lines the L-tyrosine pocket. The 'HIGH' region signature appears at 42-51 (PTADSLHLGH). Positions 175 and 179 each coordinate L-tyrosine. The short motif at 235 to 239 (KFGKT) is the 'KMSKS' region element. Residue Lys-238 coordinates ATP. In terms of domain architecture, S4 RNA-binding spans 357–415 (TDLMQALVESELQPSRGQARKAIAANGVTVNGIKQPDPDYVLNENDRYFSNYTLLRRGK).

It belongs to the class-I aminoacyl-tRNA synthetase family. TyrS type 1 subfamily. In terms of assembly, homodimer.

It localises to the cytoplasm. The catalysed reaction is tRNA(Tyr) + L-tyrosine + ATP = L-tyrosyl-tRNA(Tyr) + AMP + diphosphate + H(+). Functionally, catalyzes the attachment of tyrosine to tRNA(Tyr) in a two-step reaction: tyrosine is first activated by ATP to form Tyr-AMP and then transferred to the acceptor end of tRNA(Tyr). The sequence is that of Tyrosine--tRNA ligase from Klebsiella pneumoniae (strain 342).